The following is a 346-amino-acid chain: uncharacterized protein (346 aa).

The protein belongs to the PhyH family.

Its subcellular location is the cytoplasm. This is an uncharacterized protein from Saccharomyces cerevisiae (strain ATCC 204508 / S288c) (Baker's yeast).